The chain runs to 793 residues: ClpA homolog protein (793 aa).

The interval 1 to 24 (MRPRSNAGSSPPDPEEQEHAQVPS) is disordered. A Clp R domain is found at 22–168 (VPSFSSTLEQ…NFIAHGVAKD (147 aa)). 2 repeat regions span residues 25-88 (FSST…IDDD) and 103-168 (PTAA…VAKD). The interval 169 to 194 (PSYGESRPVQGADEPQETPKAEAGEA) is disordered. Positions 185 to 194 (ETPKAEAGEA) are enriched in basic and acidic residues. The interval 199 to 447 (LSKYCVDLNI…AQHLVSDSKR (249 aa)) is i. Residues 244 to 251 (GDPGVGKT) and 525 to 532 (GPTGVGKT) contribute to the ATP site. Residues 451–639 (LGTKEIEAVV…ILIMTSNVGA (189 aa)) are II.

The protein belongs to the ClpA/ClpB family.

In Fuscovulum blasticum (Rhodobacter blasticus), this protein is ClpA homolog protein.